We begin with the raw amino-acid sequence, 218 residues long: Probable transaldolase (218 aa).

The active-site Schiff-base intermediate with substrate is Lys-83.

This sequence belongs to the transaldolase family. Type 3B subfamily.

The protein resides in the cytoplasm. It carries out the reaction D-sedoheptulose 7-phosphate + D-glyceraldehyde 3-phosphate = D-erythrose 4-phosphate + beta-D-fructose 6-phosphate. It functions in the pathway carbohydrate degradation; pentose phosphate pathway; D-glyceraldehyde 3-phosphate and beta-D-fructose 6-phosphate from D-ribose 5-phosphate and D-xylulose 5-phosphate (non-oxidative stage): step 2/3. Transaldolase is important for the balance of metabolites in the pentose-phosphate pathway. This Kosmotoga olearia (strain ATCC BAA-1733 / DSM 21960 / TBF 19.5.1) protein is Probable transaldolase.